A 472-amino-acid chain; its full sequence is Glutamate--tRNA ligase (472 aa).

Residues 9–19 carry the 'HIGH' region motif; that stretch reads PSPTGPLHIGS. The short motif at 237–241 is the 'KMSKS' region element; that stretch reads KLSKR. Lysine 240 provides a ligand contact to ATP.

This sequence belongs to the class-I aminoacyl-tRNA synthetase family. Glutamate--tRNA ligase type 1 subfamily. In terms of assembly, monomer.

Its subcellular location is the cytoplasm. It carries out the reaction tRNA(Glu) + L-glutamate + ATP = L-glutamyl-tRNA(Glu) + AMP + diphosphate. In terms of biological role, catalyzes the attachment of glutamate to tRNA(Glu) in a two-step reaction: glutamate is first activated by ATP to form Glu-AMP and then transferred to the acceptor end of tRNA(Glu). The sequence is that of Glutamate--tRNA ligase from Buchnera aphidicola subsp. Baizongia pistaciae (strain Bp).